The primary structure comprises 554 residues: MLRCRSSINILQLHSRFHTHEIIISSKESEARTRITDEERLVIKRFPIFKNDSSYILPSSNKLTKVKKEHIALKIHKIKKLFGEDPNNVGYLNYHLPKSYPVPFEINNRAYDNSDGNGENEKVRNRLSVTKLLTKRWCELREAYDIYSETPLFEHKQIIEGKLVHQKLEEDIHPVTEDLESFVEDFEVPIPTDNFHNHVDDLFSCSMRLLSLFRCGEAREVRCHAFLDSRTGTFIDGLPKDGKDVLVSGIIDHLSLRRKIRVFTSSGFTEFNGLNDEVFENGNNFQSIIEWLNANIDFLKSEYQINVSDVKTRMFRSVVSQKSVLKYSKYQVMYYRYFLELLGLHPDVTYGQLLNSSLSRGFNIDQRIDPAKVIYFMASDEVIVDDMRKLRDGDDIGFPPFDSDFTGSSPTEEEYDMSILSDQITDPNVLERYGEFLVPWKRPVTLKYFAARLAQMYNCISPLLSKHLTLEYYYKGDNFKNINFDFNEDEIRNGAFDSSMFWFGKRDIEPIEPTSENLITYCKYCDYVNVCSWRQKATQQKKELGPRLLKLNQN.

The transit peptide at 1–17 (MLRCRSSINILQLHSRF) directs the protein to the mitochondrion. [4Fe-4S] cluster is bound by residues Cys-138, Cys-522, Cys-525, and Cys-531.

Belongs to the EXO5 family. As to quaternary structure, monomer. The cofactor is Mg(2+). It depends on [4Fe-4S] cluster as a cofactor.

The protein resides in the mitochondrion. In terms of biological role, single strand DNA specific 5'exonuclease involved in mitochondrial DNA replication and recombination. Releases dinucleotides as main products of catalysis. Has the capacity to slide across 5'double-stranded DNA or 5'RNA sequences and resumes cutting two nucleotides downstream of the double-stranded-to-single-stranded junction or RNA-to-DNA junction, respectively. The protein is Exonuclease V, mitochondrial (EXO5) of Vanderwaltozyma polyspora (strain ATCC 22028 / DSM 70294 / BCRC 21397 / CBS 2163 / NBRC 10782 / NRRL Y-8283 / UCD 57-17) (Kluyveromyces polysporus).